Consider the following 385-residue polypeptide: Probable endopeptidase MT2245 (385 aa).

Pro residues predominate over residues 235-257 (AALPPGAPPGDGPAPGVAPPPGG). The segment at 235 to 268 (AALPPGAPPGDGPAPGVAPPPGGMPGLPFVQPDG) is disordered. Positions 270–385 (GGDRTAVVQA…SGPIYDARRY (116 aa)) constitute a NlpC/P60 domain. The active-site Nucleophile is C300. Residue H348 is the Proton acceptor of the active site. The active site involves H360.

Belongs to the peptidase C40 family.

This Mycobacterium tuberculosis (strain CDC 1551 / Oshkosh) protein is Probable endopeptidase MT2245.